A 157-amino-acid polypeptide reads, in one-letter code: Histidine-containing phosphotransfer protein 5 (157 aa).

Met-1 is subject to N-acetylmethionine. Positions 41–148 (TPDFVAEVVS…NLEKQILQAG (108 aa)) constitute an HPt domain. At His-83 the chain carries Phosphohistidine.

As to quaternary structure, interacts with the B-type response regulators ARR1 and ARR2. Binds to AHK2, AHK3, AHK4 and AHK5. Post-translationally, two-component system major event consists of a His-to-Asp phosphorelay between a sensor histidine kinase (HK) and a response regulator (RR). In plants, the His-to-Asp phosphorelay involves an additional intermediate named Histidine-containing phosphotransfer protein (HPt). This multistep phosphorelay consists of a His-Asp-His-Asp sequential transfer of a phosphate group between first a His and an Asp of the HK protein, followed by the transfer to a conserved His of the HPt protein and finally the transfer to an Asp in the receiver domain of the RR protein. In terms of tissue distribution, expressed in the whole plant.

Its subcellular location is the cytoplasm. It localises to the cytosol. It is found in the nucleus. In terms of biological role, functions as a two-component phosphorelay mediator between cytokinin sensor histidine kinases and response regulators (B-type ARRs). Plays an important role in propagating cytokinin signal transduction through the multistep His-to-Asp phosphorelay. This Arabidopsis thaliana (Mouse-ear cress) protein is Histidine-containing phosphotransfer protein 5 (AHP5).